A 326-amino-acid polypeptide reads, in one-letter code: Regulation of nuclear pre-mRNA domain-containing protein 1B (326 aa).

S2 carries the post-translational modification N-acetylserine. Positions 2 to 133 constitute a CID domain; that stretch reads SSFSESALEK…QLKLSMEDSK (132 aa). The interval 127–149 is disordered; that stretch reads LSMEDSKSPPPKATEEKKSLKRT. The span at 128–144 shows a compositional bias: basic and acidic residues; it reads SMEDSKSPPPKATEEKK. Phosphoserine occurs at positions 132 and 134. Y161 carries the post-translational modification Phosphotyrosine. 2 positions are modified to phosphoserine: S166 and S299.

It belongs to the UPF0400 (RTT103) family. Homodimer. May form a heterodimer with RPRD1A. Associates with RPAP2. Associates with the RNA polymerase II complex. Preferentially expressed in a range of tumor tissues including colon, lung, liver, breast, prostate, stomach, uterine endometrium and cervical cancers with higher levels in tumors than in adjacent non-tumor tissue (at protein level).

The protein resides in the nucleus. Functionally, interacts with phosphorylated C-terminal heptapeptide repeat domain (CTD) of the largest RNA polymerase II subunit POLR2A, and participates in dephosphorylation of the CTD by RPAP2. Transcriptional regulator which enhances expression of CCND1. Promotes binding of RNA polymerase II to the CCDN1 promoter and to the termination region before the poly-A site but decreases its binding after the poly-A site. Prevents RNA polymerase II from reading through the 3' end termination site and may allow it to be recruited back to the promoter through promotion of the formation of a chromatin loop. Also enhances the transcription of a number of other cell cycle-related genes including CDK2, CDK4, CDK6 and cyclin-E but not CDKN1A, CDKN1B or cyclin-A. Promotes cell proliferation. This chain is Regulation of nuclear pre-mRNA domain-containing protein 1B (RPRD1B), found in Homo sapiens (Human).